Consider the following 692-residue polypeptide: MKKNSQIRAKIIELREKIEKWNHHYYQLQNPLVDDLVYDKTLRELEKLERENFFLFSLEELNQSPSQKVGSKITSKFEKVAHSSPMLSLNKAYSNEELEKWAKKAREILKTVTFFVEPKIDGIALSLFYQNGNLIKALTRGDGVFGENVLVNALKINDEFIPKKINYLEDLEVRGEIYIDNSTFASLQLETKKFKNPRNAASGILRRYKNHKPKIDAKSIKFLEEESDFRYLKSFFYTLVNPEKHKINSQFDSTNFLRNLGFQVNPFQKKCSDLKDVFNFISIIKQKRDFLNYNIDGVVVKVNEFSIYEKLGSTSKFPHSAIAFKFEDDIAKTKLLAIFATIGRTGKVTYNAKIEPVTLAGSKISSAILPNYSYIENLKLNLNTEVYIKKAGEIIPQIIGSVHNYPKTNFSIVKNCPKCNSELVNSESGLDQFCQNQFCPEIILQKIVHFCSKNALNIESLAQKRIEKFLEKGLISSACDIFYLKDKLELIYERLSNKNQLLTKQNASQSMQIKSIMKLLNEVERAKNIDFYRLIFGLGIRNVGLKAAKILSRYASNLSELRNLDFNLLKNQHDFGPVIIESLIDYFNNQKNSEQLNCLETVGFNFKTTFLTNQSNSWASFAISGKLSKPRDEYVRIIEESGASFHESLTKKTDFLLLGQSAGSKIEKAKKAGIKIINEVQFFDLIKNSKKT.

NAD(+) is bound by residues 35-39, 88-89, and E117; these read DLVYD and SL. The active-site N6-AMP-lysine intermediate is K119. 4 residues coordinate NAD(+): R140, E176, K301, and K325. Zn(2+)-binding residues include C416, C419, C434, and C439. One can recognise a BRCT domain in the interval 611–692; that stretch reads LTNQSNSWAS…FDLIKNSKKT (82 aa).

This sequence belongs to the NAD-dependent DNA ligase family. LigA subfamily. Mg(2+) is required as a cofactor. Mn(2+) serves as cofactor.

It catalyses the reaction NAD(+) + (deoxyribonucleotide)n-3'-hydroxyl + 5'-phospho-(deoxyribonucleotide)m = (deoxyribonucleotide)n+m + AMP + beta-nicotinamide D-nucleotide.. DNA ligase that catalyzes the formation of phosphodiester linkages between 5'-phosphoryl and 3'-hydroxyl groups in double-stranded DNA using NAD as a coenzyme and as the energy source for the reaction. It is essential for DNA replication and repair of damaged DNA. This is DNA ligase from Mesomycoplasma hyopneumoniae (strain 232) (Mycoplasma hyopneumoniae).